A 654-amino-acid polypeptide reads, in one-letter code: Fructose-1,6-bisphosphatase class 3 (654 aa).

A disordered region spans residues 288–307 (NPAFKPKKRPDKHERLTQRE). Basic and acidic residues predominate over residues 298 to 307 (DKHERLTQRE).

This sequence belongs to the FBPase class 3 family. Mn(2+) is required as a cofactor.

The enzyme catalyses beta-D-fructose 1,6-bisphosphate + H2O = beta-D-fructose 6-phosphate + phosphate. The protein operates within carbohydrate biosynthesis; gluconeogenesis. The protein is Fructose-1,6-bisphosphatase class 3 of Staphylococcus aureus (strain USA300).